The following is a 30-amino-acid chain: Brevinin-2PTa (30 aa).

The cysteines at positions 24 and 30 are disulfide-linked.

In terms of tissue distribution, expressed by the skin glands.

It localises to the secreted. Its function is as follows. Has antibacterial activity against the Gram-positive bacterium S.aureus ATCC 25923 (MIC=18 uM) and the Gram-negative bacterium E.coli ATCC 25726 (MIC=18 uM). This chain is Brevinin-2PTa, found in Pulchrana picturata (Malaysian fire frog).